The primary structure comprises 108 residues: Putative septation protein SpoVG (108 aa).

A disordered region spans residues 84-108; sequence FEKQSSVETEPVTEENMETAENENE. Residues 94 to 108 show a composition bias toward acidic residues; the sequence is PVTEENMETAENENE.

It belongs to the SpoVG family.

In terms of biological role, could be involved in septation. This Finegoldia magna (strain ATCC 29328 / DSM 20472 / WAL 2508) (Peptostreptococcus magnus) protein is Putative septation protein SpoVG.